A 432-amino-acid chain; its full sequence is Sonic hedgehog protein (432 aa).

The signal sequence occupies residues 1-26; it reads MDEMILLRRVLLAGFICALLVPSGLS. Cys27 carries N-palmitoyl cysteine lipidation. The short motif at 35-41 is the Cardin-Weintraub element; it reads TRKRFKK. The Ca(2+) site is built by Glu92, Glu93, Asp98, Thr128, Glu129, Asp132, and Asp134. 3 residues coordinate Zn(2+): His143, Asp150, and His185. A lipid anchor (Cholesterol glycine ester) is attached at Gly200.

This sequence belongs to the hedgehog family. As to quaternary structure, interacts with HHATL/GUP1 which negatively regulates HHAT-mediated palmitoylation of the SHH N-terminus. Interacts with BOC and CDON. Interacts with HHIP. Interacts with DISP1 via its cholesterol anchor. Interacts with SCUBE2. In terms of assembly, multimer. The C-terminal domain displays an autoproteolysis activity and a cholesterol transferase activity. Both activities result in the cleavage of the full-length protein and covalent attachment of a cholesterol moiety to the C-terminal of the newly generated N-terminal fragment (ShhN). Cholesterylation is required for the sonic hedgehog protein N-product targeting to lipid rafts and multimerization. ShhN is the active species in both local and long-range signaling, whereas the C-product (ShhC) is degraded in the reticulum endoplasmic. In terms of processing, N-palmitoylation by HHAT of ShhN is required for sonic hedgehog protein N-product multimerization and full activity. It is a prerequisite for the membrane-proximal positioning and the subsequent shedding of this N-terminal peptide. Post-translationally, the lipidated N- and C-terminal peptides of ShhNp can be cleaved (shedding). The N-terminal palmitoylated peptide is cleaved at the Cardin-Weintraub (CW) motif site. The cleavage reduced the interactions with heparan sulfate. The cleavage is enhanced by SCUBE2.

The protein resides in the endoplasmic reticulum membrane. The protein localises to the golgi apparatus membrane. It localises to the cell membrane. The enzyme catalyses glycyl-L-cysteinyl-[protein] + cholesterol + H(+) = [protein]-C-terminal glycyl cholesterol ester + N-terminal L-cysteinyl-[protein]. The C-terminal part of the sonic hedgehog protein precursor displays an autoproteolysis and a cholesterol transferase activity. Both activities result in the cleavage of the full-length protein into two parts (ShhN and ShhC) followed by the covalent attachment of a cholesterol moiety to the C-terminal of the newly generated ShhN. Both activities occur in the endoplasmic reticulum. Once cleaved, ShhC is degraded in the endoplasmic reticulum. In terms of biological role, the dually lipidated sonic hedgehog protein N-product (ShhNp) is a morphogen which is essential for a variety of patterning events during development. Induces ventral cell fate in the neural tube and somites. Involved in the patterning of the anterior-posterior axis of the developing limb bud. Essential for axon guidance. Binds to the patched (PTCH1) receptor, which functions in association with smoothened (SMO), to activate the transcription of target genes. In the absence of SHH, PTCH1 represses the constitutive signaling activity of SMO. This is Sonic hedgehog protein from Cynops pyrrhogaster (Japanese fire-bellied newt).